Here is a 311-residue protein sequence, read N- to C-terminus: Probable manganese-dependent inorganic pyrophosphatase (311 aa).

Mn(2+)-binding residues include His9, Asp13, Asp15, Asp77, His99, and Asp151.

The protein belongs to the PPase class C family. It depends on Mn(2+) as a cofactor.

The protein localises to the cytoplasm. The catalysed reaction is diphosphate + H2O = 2 phosphate + H(+). This chain is Probable manganese-dependent inorganic pyrophosphatase, found in Streptococcus equi subsp. equi (strain 4047).